The chain runs to 906 residues: MAGNVKKSSGAGGGSGSGGSGSGGLIGLMKDAFQPHHHHHHHLSPHPPGTVDKKMVEKCWKLMDKVVRLCQNPKLALKNSPPYILDLLPDTYQHLRTILSRYEGKMETLGENEYFRVFMENLMKKTKQTISLFKEGKERMYEENSQPRRNLTKLSLIFSHMLAELKGIFPSGLFQGDTFRITKADAAEFWRKAFGEKTIVPWKSFRQALHEVHPISSGLEAMALKSTIDLTCNDYISVFEFDIFTRLFQPWSSLLRNWNSLAVTHPGYMAFLTYDEVKARLQKFIHKPGSYIFRLSCTRLGQWAIGYVTADGNILQTIPHNKPLFQALIDGFREGFYLFPDGRNQNPDLTGLCEPTPQDHIKVTQEQYELYCEMGSTFQLCKICAENDKDVKIEPCGHLMCTSCLTSWQESEGQGCPFCRCEIKGTEPIVVDPFDPRGSGSLLRQGAEGAPSPNYDDDDDERADDTLFMMKELAGAKVERPPSPFSMAPQASLPPVPPRLDLLPQRVCVPSSASALGTASKAASGSLHKDKPLPVPPTLRDLPPPPPPDRPYSVGAESRPQRRPLPCTPGDCPSRDKLPPVPSSRLGDSWLPRPIPKVPVSAPSSSDPWTGRELTNRHSLPFSLPSQMEPRPDVPRLGSTFSLDTSMSMNSSPLVGPECDHPKIKPSSSANAIYSLAARPLPVPKLPPGEQCEGEEDTEYMTPSSRPLRPLDTSQSSRACDCDQQIDSCTYEAMYNIQSQAPSITESSTFGEGNLAAAHANTGPEESENEDDGYDVPKPPVPAVLARRTLSDISNASSSFGWLSLDGDPTTNVTEGSQVPERPPKPFPRRINSERKAGSCQQGSGPAASAATASPQLSSEIENLMSQGYSYQDIQKALVIAQNNIEMAKNILREFVSISSPAHVAT.

The interval 1 to 21 (MAGNVKKSSGAGGGSGSGGSG) is disordered. The interval 1 to 357 (MAGNVKKSSG…DLTGLCEPTP (357 aa)) is sufficient for interaction with EPHB1. A compositionally biased stretch (gly residues) spans 10–21 (GAGGGSGSGGSG). The segment at 47–175 (PPGTVDKKMV…KGIFPSGLFQ (129 aa)) is 4H. The 305-residue stretch at 47 to 351 (PPGTVDKKMV…GRNQNPDLTG (305 aa)) folds into the Cbl-PTB domain. The interval 176 to 248 (GDTFRITKAD…FEFDIFTRLF (73 aa)) is EF-hand-like. 5 residues coordinate Ca(2+): Asp229, Thr231, Asn233, Tyr235, and Glu240. The tract at residues 249–351 (QPWSSLLRNW…GRNQNPDLTG (103 aa)) is SH2-like. 4-O-phospho-L-tyrosine is bound at residue Arg294. A linker region spans residues 352–380 (LCEPTPQDHIKVTQEQYELYCEMGSTFQL). Positions 358–906 (QDHIKVTQEQ…SISSPAHVAT (549 aa)) are required for ubiquitination of SPRED2. Tyr371 carries the post-translational modification Phosphotyrosine; by INSR. Residues 381 to 420 (CKICAENDKDVKIEPCGHLMCTSCLTSWQESEGQGCPFCR) form an RING-type zinc finger. Disordered stretches follow at residues 432–462 (DPFD…DDER), 477–498 (KVER…PVPP), and 519–667 (ASKA…IKPS). Phosphoserine is present on residues Ser439, Ser452, and Ser483. Positions 533–550 (LPVPPTLRDLPPPPPPDR) are enriched in pro residues. Residues Ser619, Ser642, Ser668, and Ser669 each carry the phosphoserine modification. Polar residues predominate over residues 639 to 653 (STFSLDTSMSMNSSP). The interval 648–906 (SMNSSPLVGP…SISSPAHVAT (259 aa)) is interaction with CD2AP. Tyr674 carries the post-translational modification Phosphotyrosine. Residues 680-719 (PLPVPKLPPGEQCEGEEDTEYMTPSSRPLRPLDTSQSSRA) are disordered. Tyr700 is subject to Phosphotyrosine; by ABL1. Residue Tyr731 is modified to Phosphotyrosine; by SRC. Disordered regions lie at residues 743–781 (SITE…KPPV) and 799–854 (SFGW…ATAS). Residues 765-774 (EESENEDDGY) show a composition bias toward acidic residues. Tyr774 is subject to Phosphotyrosine. Residues 838-854 (GSCQQGSGPAASAATAS) show a composition bias toward low complexity. A UBA domain is found at 856–895 (QLSSEIENLMSQGYSYQDIQKALVIAQNNIEMAKNILREF). Residue Ser900 is modified to Phosphoserine.

In terms of assembly, forms homodimers; IFT20 promotes the formation of stable homodimers. Interacts (phosphorylated at Tyr-731) with PIK3R1. Associates with NCK via its SH3 domain. The phosphorylated C-terminus interacts with CD2AP via its second SH3 domain. Binds to UBE2L3. Interacts with adapters SLA, SLA2 and with the phosphorylated C-terminus of SH2B2. Interacts with EGFR, SYK and ZAP70 via the highly conserved Cbl-N region. Also interacts with SORBS1 and INPPL1/SHIP2. Interacts with phosphorylated LAT2. Interacts with CBLB. Interacts with ALK, AXL, BLK, FGR and FGFR2. Interacts with CSF1R, EPHB1, FLT1, KDR, PDGFRA and PDGFRB; regulates receptor degradation through ubiquitination. Interacts with HCK and LYN. Interacts with ATX2. Interacts with TEK/TIE2 (tyrosine phosphorylated). Interacts with SH3KBP1 and this interaction is inhibited in the presence of SHKBP1 or ARAP1. Interacts with SIGLEC10. Interacts with IFT20. Interacts with SPRY2; the interaction inhibits CBL-mediated ubiquitination of EGFR. Interacts (phosphorylated at Tyr-774) with tensin TNS4 (via SH2 domain); the interaction is enhanced in the presence of EGF and reduces interaction of CBL with EGFR. Interacts with EGFR; the interaction is reduced in the presence of TNS4. Interacts with CD5. Interacts with CD93. As to quaternary structure, (Microbial infection) Interacts with M.tuberculosis LpqN, which influences the balance between intrinsic antibacterial and antiviral defense. Post-translationally, phosphorylated on tyrosine residues by ALK, EGFR, SYK, FYN and ZAP70. Phosphorylated on tyrosine residues in response to FLT1 and KIT signaling. Phosphorylated on tyrosine residues by INSR and FGR. Phosphorylated on several tyrosine residues by constitutively activated FGFR3. Not phosphorylated at Tyr-731 by FGFR3. Phosphorylated on tyrosine residues by activated CSF1R, PDGFRA and PDGFRB. Phosphorylated on tyrosine residues by HCK. Ubiquitinated, leading to its degradation via the proteasome. Ubiquitination is negatively regulated by IFT20.

The protein localises to the cytoplasm. The protein resides in the cell membrane. It localises to the cell projection. Its subcellular location is the cilium. It is found in the golgi apparatus. The enzyme catalyses S-ubiquitinyl-[E2 ubiquitin-conjugating enzyme]-L-cysteine + [acceptor protein]-L-lysine = [E2 ubiquitin-conjugating enzyme]-L-cysteine + N(6)-ubiquitinyl-[acceptor protein]-L-lysine.. It functions in the pathway protein modification; protein ubiquitination. Its function is as follows. E3 ubiquitin-protein ligase that acts as a negative regulator of many signaling pathways by mediating ubiquitination of cell surface receptors. Accepts ubiquitin from specific E2 ubiquitin-conjugating enzymes, and then transfers it to substrates promoting their degradation by the proteasome. Recognizes activated receptor tyrosine kinases, including KIT, FLT1, FGFR1, FGFR2, PDGFRA, PDGFRB, CSF1R, EPHA8 and KDR and mediates their ubiquitination to terminate signaling. Recognizes membrane-bound HCK, SRC and other kinases of the SRC family and mediates their ubiquitination and degradation. Ubiquitinates EGFR and SPRY2. Ubiquitinates NECTIN1 following association between NECTIN1 and herpes simplex virus 1/HHV-1 envelope glycoprotein D, leading to NECTIN1 removal from cell surface. Participates in signal transduction in hematopoietic cells. Plays an important role in the regulation of osteoblast differentiation and apoptosis. Essential for osteoclastic bone resorption. The 'Tyr-731' phosphorylated form induces the activation and recruitment of phosphatidylinositol 3-kinase to the cell membrane in a signaling pathway that is critical for osteoclast function. May be functionally coupled with the E2 ubiquitin-protein ligase UB2D3. In association with CBLB, required for proper feedback inhibition of ciliary platelet-derived growth factor receptor-alpha (PDGFRA) signaling pathway via ubiquitination and internalization of PDGFRA. The protein is E3 ubiquitin-protein ligase CBL (CBL) of Homo sapiens (Human).